Reading from the N-terminus, the 328-residue chain is 4-hydroxythreonine-4-phosphate dehydrogenase (328 aa).

Substrate contacts are provided by H133 and T134. A divalent metal cation is bound by residues H163, H208, and H263. The substrate site is built by K271, N280, and R289.

It belongs to the PdxA family. As to quaternary structure, homodimer. The cofactor is Zn(2+). Requires Mg(2+) as cofactor. It depends on Co(2+) as a cofactor.

It is found in the cytoplasm. The enzyme catalyses 4-(phosphooxy)-L-threonine + NAD(+) = 3-amino-2-oxopropyl phosphate + CO2 + NADH. Its pathway is cofactor biosynthesis; pyridoxine 5'-phosphate biosynthesis; pyridoxine 5'-phosphate from D-erythrose 4-phosphate: step 4/5. In terms of biological role, catalyzes the NAD(P)-dependent oxidation of 4-(phosphooxy)-L-threonine (HTP) into 2-amino-3-oxo-4-(phosphooxy)butyric acid which spontaneously decarboxylates to form 3-amino-2-oxopropyl phosphate (AHAP). The polypeptide is 4-hydroxythreonine-4-phosphate dehydrogenase (Chromobacterium violaceum (strain ATCC 12472 / DSM 30191 / JCM 1249 / CCUG 213 / NBRC 12614 / NCIMB 9131 / NCTC 9757 / MK)).